Consider the following 266-residue polypeptide: UPF0246 protein PHZ_c0561 (266 aa).

The segment at 245-266 is disordered; sequence DEEFTFARPQPPPPAASRNKED.

This sequence belongs to the UPF0246 family.

The polypeptide is UPF0246 protein PHZ_c0561 (Phenylobacterium zucineum (strain HLK1)).